The sequence spans 873 residues: Bifunctional heparan sulfate N-deacetylase/N-sulfotransferase 3 (873 aa).

The Cytoplasmic segment spans residues 1–13 (MSFIMKPHRHFQR). Residues 14–34 (TLILLATFCMVSIIISAYYLY) traverse the membrane as a helical; Signal-anchor for type II membrane protein segment. Residues 35 to 873 (SGYKQESEVS…WLRQELQKVR (839 aa)) are Lumenal-facing. A heparan sulfate N-deacetylase 3 region spans residues 36–589 (GYKQESEVSG…KRHRDIWSKE (554 aa)). N-linked (GlcNAc...) asparagine glycosylation is found at Asn146, Asn226, Asn342, and Asn392. The interval 590-873 (KTCDRLPKFL…WLRQELQKVR (284 aa)) is heparan sulfate N-sulfotransferase 3. Lys605 (for sulfotransferase activity) is an active-site residue. 3'-phosphoadenylyl sulfate is bound at residue 605-609 (KTGTT). N-linked (GlcNAc...) asparagine glycosylation is present at Asn658. Ser703 provides a ligand contact to 3'-phosphoadenylyl sulfate. Residue Asn794 is glycosylated (N-linked (GlcNAc...) asparagine). Cys809 and Cys819 are disulfide-bonded. 824-828 (KGRKY) provides a ligand contact to 3'-phosphoadenylyl sulfate.

This sequence belongs to the sulfotransferase 1 family. NDST subfamily. Monomer. As to expression, strongly expressed strongly in brain. Expressed at high level at embryonic day 11 compared to other stages of development. Weakly expressed in adult heart, kidney, muscle, endothelial cells and testis but not in other tissues.

The protein resides in the golgi apparatus membrane. The catalysed reaction is alpha-D-glucosaminyl-[heparan sulfate](n) + 3'-phosphoadenylyl sulfate = N-sulfo-alpha-D-glucosaminyl-[heparan sulfate](n) + adenosine 3',5'-bisphosphate + 2 H(+). The protein operates within glycan metabolism; heparan sulfate biosynthesis. Its pathway is glycan metabolism; heparin biosynthesis. Essential bifunctional enzyme that catalyzes both the N-deacetylation and the N-sulfation of glucosamine (GlcNAc) of the glycosaminoglycan in heparan sulfate. Modifies the GlcNAc-GlcA disaccharide repeating sugar backbone to make N-sulfated heparosan, a prerequisite substrate for later modifications in heparin biosynthesis. Has high deacetylase activity but low sulfotransferase activity. The polypeptide is Bifunctional heparan sulfate N-deacetylase/N-sulfotransferase 3 (Ndst3) (Mus musculus (Mouse)).